Reading from the N-terminus, the 611-residue chain is Phosphomethylpyrimidine synthase (611 aa).

Substrate-binding positions include Asn212, Met241, Tyr270, His306, 326 to 328, 367 to 370, and Glu406; these read SRG and DGLR. Zn(2+) is bound at residue His410. Substrate is bound at residue Tyr433. Zn(2+) is bound at residue His474. 3 residues coordinate [4Fe-4S] cluster: Cys554, Cys557, and Cys562.

The protein belongs to the ThiC family. Homodimer. Requires [4Fe-4S] cluster as cofactor.

It carries out the reaction 5-amino-1-(5-phospho-beta-D-ribosyl)imidazole + S-adenosyl-L-methionine = 4-amino-2-methyl-5-(phosphooxymethyl)pyrimidine + CO + 5'-deoxyadenosine + formate + L-methionine + 3 H(+). The protein operates within cofactor biosynthesis; thiamine diphosphate biosynthesis. In terms of biological role, catalyzes the synthesis of the hydroxymethylpyrimidine phosphate (HMP-P) moiety of thiamine from aminoimidazole ribotide (AIR) in a radical S-adenosyl-L-methionine (SAM)-dependent reaction. This is Phosphomethylpyrimidine synthase from Bartonella bacilliformis (strain ATCC 35685 / KC583 / Herrer 020/F12,63).